A 253-amino-acid polypeptide reads, in one-letter code: Acidic endochitinase pcht28 (253 aa).

The signal sequence occupies residues 1 to 24 (MKFNIVSPVALSCLFFLFLTGTLA). Glu92 acts as the Proton donor in catalysis. Cys212 and Cys244 form a disulfide bridge.

It belongs to the glycosyl hydrolase 19 family. Chitinase class II subfamily.

The protein localises to the secreted. Its subcellular location is the extracellular space. It carries out the reaction Random endo-hydrolysis of N-acetyl-beta-D-glucosaminide (1-&gt;4)-beta-linkages in chitin and chitodextrins.. Functionally, defense against chitin-containing fungal pathogens. This is Acidic endochitinase pcht28 from Solanum chilense (Tomato).